We begin with the raw amino-acid sequence, 377 residues long: Probable pectin lyase D (377 aa).

Positions 1 to 17 (MRVSAFALLAAAATAAA) are cleaved as a signal peptide. 2 disulfides stabilise this stretch: C80/C99 and C89/C223. Residue N126 is glycosylated (N-linked (GlcNAc...) asparagine). Residue R253 is part of the active site. C321 and C329 are joined by a disulfide.

The protein belongs to the polysaccharide lyase 1 family.

Its subcellular location is the secreted. It catalyses the reaction Eliminative cleavage of (1-&gt;4)-alpha-D-galacturonan methyl ester to give oligosaccharides with 4-deoxy-6-O-methyl-alpha-D-galact-4-enuronosyl groups at their non-reducing ends.. Pectinolytic enzymes consist of four classes of enzymes: pectin lyase, polygalacturonase, pectin methylesterase and rhamnogalacturonase. Among pectinolytic enzymes, pectin lyase is the most important in depolymerization of pectin, since it cleaves internal glycosidic bonds of highly methylated pectins. The chain is Probable pectin lyase D (pelD) from Emericella nidulans (strain FGSC A4 / ATCC 38163 / CBS 112.46 / NRRL 194 / M139) (Aspergillus nidulans).